A 377-amino-acid chain; its full sequence is MPGEQTGETPTVAGVGGGGAGCSAGNSGGSSGCGAGGGGGGSGGGGGGGGDSQRSIPTPFLTKTYQLVEDPVYDELISWNEDGTTFIVWRPAEFARDLLPKYFKHNNFSSFVRQLNTYGFRKVVPDRWEFSNDCFKRGEKILLRDIQRRKISQPAMAAAAAAAAAAVAASAVTVAAVPVVAHIVSPSNSGEEQVISSNSSPAAAAAAIGGVVGGGSLQRTTSCTTAPELVEENERLRKDNERLRKEMTKLKGLYANIYTLMANFTPGQEDCAHLLPEGKPLDLLPERQEMSEAIMASEIETGIGLKLGEDLTPRLFGVSIGVKRARREEELGAAEEEDDDRREAAAQEGEQSSDVKAEPMEENNSGNHNGSWLELGK.

Residues 1–56 (MPGEQTGETPTVAGVGGGGAGCSAGNSGGSSGCGAGGGGGGSGGGGGGGGDSQRSI) are disordered. Positions 14–51 (GVGGGGAGCSAGNSGGSSGCGAGGGGGGSGGGGGGGGD) are enriched in gly residues. A DNA-binding region spans residues 57–151 (PTPFLTKTYQ…LLRDIQRRKI (95 aa)). Positions 220-265 (TTSCTTAPELVEENERLRKDNERLRKEMTKLKGLYANIYTLMANFT) are hydrophobic repeat HR-A/B. The Nuclear localization signal motif lies at 323–327 (KRARR). The interval 326–377 (RREEELGAAEEEDDDRREAAAQEGEQSSDVKAEPMEENNSGNHNGSWLELGK) is disordered. Acidic residues predominate over residues 331–340 (LGAAEEEDDD).

It belongs to the HSF family. Class B subfamily. In terms of assembly, homotrimer. Post-translationally, exhibits temperature-dependent phosphorylation.

Its subcellular location is the nucleus. In terms of biological role, transcriptional regulator that specifically binds DNA sequence 5'-AGAAnnTTCT-3' known as heat shock promoter elements (HSE). This chain is Heat stress transcription factor B-2b (HSFB2B), found in Arabidopsis thaliana (Mouse-ear cress).